The following is a 326-amino-acid chain: Putative F-box protein At3g22710 (326 aa).

In terms of domain architecture, F-box spans 1–50 (MTMPDLPPDLVEEILSRVPATSVKKLRSTCTQWNAIFKDERFTEKHFSKA).

This is Putative F-box protein At3g22710 from Arabidopsis thaliana (Mouse-ear cress).